The chain runs to 345 residues: Probable S-adenosylmethionine carrier 2, chloroplastic (345 aa).

A chloroplast-targeting transit peptide spans 1–31 (MTKALSGFCCSLSLSTLVRSSSSHMDSDIVS). Solcar repeat units follow at residues 76–148 (RVLY…TKQK), 157–239 (LSAV…LRIG), and 252–334 (ENAM…TKQI). Helical transmembrane passes span 82–102 (LITG…IDTI), 121–141 (YSGL…FFGV), 156–176 (NLSA…SSIV), 254–274 (AMIG…LDVI), and 309–329 (GMGP…GVLE).

It belongs to the mitochondrial carrier (TC 2.A.29) family. Expressed at low levels in seedlings, leaves, flowers, stems and roots.

The protein localises to the plastid. It localises to the chloroplast membrane. Its function is as follows. Probable S-adenosylmethionine (SAM) transporter able to catalyze both uniport and exchange reactions through membranes. In Arabidopsis thaliana (Mouse-ear cress), this protein is Probable S-adenosylmethionine carrier 2, chloroplastic (SAMC2).